The primary structure comprises 446 residues: tRNA modification GTPase MnmE (446 aa).

Arginine 22, glutamate 80, and arginine 119 together coordinate (6S)-5-formyl-5,6,7,8-tetrahydrofolate. Residues 215–370 (GFKVAIIGKP…LILALENIMN (156 aa)) form the TrmE-type G domain. Asparagine 225 is a K(+) binding site. GTP is bound by residues 225–230 (NVGKSS), 244–250 (SDIAGTT), and 269–272 (DTAG). Serine 229 is a binding site for Mg(2+). Serine 244, isoleucine 246, and threonine 249 together coordinate K(+). Threonine 250 provides a ligand contact to Mg(2+). Position 446 (lysine 446) interacts with (6S)-5-formyl-5,6,7,8-tetrahydrofolate.

This sequence belongs to the TRAFAC class TrmE-Era-EngA-EngB-Septin-like GTPase superfamily. TrmE GTPase family. In terms of assembly, homodimer. Heterotetramer of two MnmE and two MnmG subunits. Requires K(+) as cofactor.

The protein localises to the cytoplasm. Its function is as follows. Exhibits a very high intrinsic GTPase hydrolysis rate. Involved in the addition of a carboxymethylaminomethyl (cmnm) group at the wobble position (U34) of certain tRNAs, forming tRNA-cmnm(5)s(2)U34. The sequence is that of tRNA modification GTPase MnmE from Sulfurimonas denitrificans (strain ATCC 33889 / DSM 1251) (Thiomicrospira denitrificans (strain ATCC 33889 / DSM 1251)).